We begin with the raw amino-acid sequence, 282 residues long: Bifunctional protein FolD (282 aa).

Residues 162–164, Ser-187, and Val-228 each bind NADP(+); that span reads GRS.

This sequence belongs to the tetrahydrofolate dehydrogenase/cyclohydrolase family. As to quaternary structure, homodimer.

It catalyses the reaction (6R)-5,10-methylene-5,6,7,8-tetrahydrofolate + NADP(+) = (6R)-5,10-methenyltetrahydrofolate + NADPH. The enzyme catalyses (6R)-5,10-methenyltetrahydrofolate + H2O = (6R)-10-formyltetrahydrofolate + H(+). Its pathway is one-carbon metabolism; tetrahydrofolate interconversion. Catalyzes the oxidation of 5,10-methylenetetrahydrofolate to 5,10-methenyltetrahydrofolate and then the hydrolysis of 5,10-methenyltetrahydrofolate to 10-formyltetrahydrofolate. In Thermus thermophilus (strain ATCC BAA-163 / DSM 7039 / HB27), this protein is Bifunctional protein FolD.